Consider the following 201-residue polypeptide: Peptidyl-tRNA hydrolase (201 aa).

TRNA is bound at residue Y14. The Proton acceptor role is filled by H19. TRNA contacts are provided by Y64, N66, and N113. The disordered stretch occupies residues 178 to 201; sequence PGPAMNRFNRKPEPPESGGEVAAK.

Belongs to the PTH family. Monomer.

Its subcellular location is the cytoplasm. It catalyses the reaction an N-acyl-L-alpha-aminoacyl-tRNA + H2O = an N-acyl-L-amino acid + a tRNA + H(+). Its function is as follows. Hydrolyzes ribosome-free peptidyl-tRNAs (with 1 or more amino acids incorporated), which drop off the ribosome during protein synthesis, or as a result of ribosome stalling. Functionally, catalyzes the release of premature peptidyl moieties from peptidyl-tRNA molecules trapped in stalled 50S ribosomal subunits, and thus maintains levels of free tRNAs and 50S ribosomes. The protein is Peptidyl-tRNA hydrolase of Koribacter versatilis (strain Ellin345).